The primary structure comprises 360 residues: DNA replication and repair protein RecF (360 aa).

33 to 40 (GENGSGKT) is an ATP binding site.

This sequence belongs to the RecF family.

It is found in the cytoplasm. Functionally, the RecF protein is involved in DNA metabolism; it is required for DNA replication and normal SOS inducibility. RecF binds preferentially to single-stranded, linear DNA. It also seems to bind ATP. The chain is DNA replication and repair protein RecF from Rickettsia bellii (strain OSU 85-389).